The primary structure comprises 113 residues: MNNTLSKRLCLTAMLTLAAVVYTTSAFAETSKLVIESGDSAQSRQEAAMEKEQWNDTRSLRQKVNTRAEKEWDKADAAFDNRDKCEQSANINAYWEPNTLRCLDRRTGRVITP.

The first 28 residues, 1–28, serve as a signal peptide directing secretion; the sequence is MNNTLSKRLCLTAMLTLAAVVYTTSAFA.

This sequence belongs to the UPF0482 family.

The chain is UPF0482 protein YnfB from Salmonella agona (strain SL483).